A 660-amino-acid chain; its full sequence is DNA primase (660 aa).

The CHC2-type zinc-finger motif lies at 40–64 (CPFHKEKTPSFTVSPDKQFYYCFGC). The interval 94–115 (GMEVPREQGRRDQKPRQPTDSP) is disordered. Residues 97 to 110 (VPREQGRRDQKPRQ) show a composition bias toward basic and acidic residues. A Toprim domain is found at 261 to 343 (DEIIVVEGYM…GRRARFLFLP (83 aa)). Mg(2+)-binding residues include E267, D311, and D313. Disordered regions lie at residues 425-449 (DPQQ…DPGY) and 476-519 (QAWK…APVE). Polar residues predominate over residues 428–442 (QVEQLAQQAPATSSM). Over residues 488-498 (PWSDKPWDKNR) the composition is skewed to basic and acidic residues.

The protein belongs to the DnaG primase family. As to quaternary structure, monomer. Interacts with DnaB. The cofactor is Zn(2+). Mg(2+) serves as cofactor.

The enzyme catalyses ssDNA + n NTP = ssDNA/pppN(pN)n-1 hybrid + (n-1) diphosphate.. In terms of biological role, RNA polymerase that catalyzes the synthesis of short RNA molecules used as primers for DNA polymerase during DNA replication. This is DNA primase from Pseudomonas putida (strain ATCC 47054 / DSM 6125 / CFBP 8728 / NCIMB 11950 / KT2440).